We begin with the raw amino-acid sequence, 351 residues long: Transaldolase (351 aa).

K138 serves as the catalytic Schiff-base intermediate with substrate.

Belongs to the transaldolase family. Type 2 subfamily.

Its subcellular location is the cytoplasm. The catalysed reaction is D-sedoheptulose 7-phosphate + D-glyceraldehyde 3-phosphate = D-erythrose 4-phosphate + beta-D-fructose 6-phosphate. It participates in carbohydrate degradation; pentose phosphate pathway; D-glyceraldehyde 3-phosphate and beta-D-fructose 6-phosphate from D-ribose 5-phosphate and D-xylulose 5-phosphate (non-oxidative stage): step 2/3. In terms of biological role, transaldolase is important for the balance of metabolites in the pentose-phosphate pathway. The sequence is that of Transaldolase from Neisseria meningitidis serogroup C / serotype 2a (strain ATCC 700532 / DSM 15464 / FAM18).